Consider the following 240-residue polypeptide: MVLELYLDLLSQPCRAIYIFAKKNNIPFQMHTVELRKGEHLSDAFARVNPMKRVPAMMDGGFTLCESVAILLYLAHKYKVPDHWYPQDLQARARVDEYLAWQHTGLRRSCLRALWHKVMFPVFLGEQIPPETLAATLAELDVNLQVLEDKFLQDKDFLVGPHISLADLVAITELMHPVGGGCPVFEGHPRLAAWYQRVEAAVGKDLFREAHEVILKVKDCPPADLIIKQKLMPRVLAMIQ.

In terms of domain architecture, GST N-terminal spans 2 to 82 (VLELYLDLLS…YLAHKYKVPD (81 aa)). Glutathione-binding positions include histidine 40, 53–54 (RV), and 66–67 (ES). One can recognise a GST C-terminal domain in the interval 88-222 (DLQARARVDE…VILKVKDCPP (135 aa)).

It belongs to the GST superfamily. Theta family. As to quaternary structure, homodimer. As to expression, in liver, highest expression found in central vein limiting plate hepatocytes. Also expressed in interlobular bile duct epithelial cells. In lung, expressed in club cells and ciliated cells of the bronchiolar epithelium and in type II alveolar cells of the lung parenchyma.

Its subcellular location is the cytoplasm. It is found in the nucleus. The catalysed reaction is RX + glutathione = an S-substituted glutathione + a halide anion + H(+). Functionally, conjugation of reduced glutathione to a wide number of exogenous and endogenous hydrophobic electrophiles. Also binds steroids, bilirubin, carcinogens and numerous organic anions. Has dichloromethane dehalogenase activity. The sequence is that of Glutathione S-transferase theta-1 (Gstt1) from Mus musculus (Mouse).